Consider the following 689-residue polypeptide: Quinidine resistance protein 3 (689 aa).

Residues 1-24 (MQAQGSQSNVGSLRSNCSDNSLPN) show a composition bias toward polar residues. The disordered stretch occupies residues 1–73 (MQAQGSQSNV…DNQLSRLKSE (73 aa)). The Extracellular portion of the chain corresponds to 1 to 108 (MQAQGSQSNV…RDYPPMMKKM (108 aa)). Basic and acidic residues-rich tracts occupy residues 29–51 (MHCDESSGSPHSEHNDYSYEKTN) and 59–73 (SREHRDNQLSRLKSE). Residues 109–131 (IVFLIAFSSMMGPMGTSIIFPAI) form a helical membrane-spanning segment. At 132-139 (NSITTEFK) the chain is on the cytoplasmic side. Residues 140–163 (TSVIMVNVSIGVYLLSLGVFPLWW) form a helical membrane-spanning segment. Residues 164 to 175 (SSLSELEGRRTT) are Extracellular-facing. Residues 176–193 (YITSFALLFAFNIGSALA) form a helical membrane-spanning segment. Residues 194-235 (PDINSFIALRMLCGAASASVQSVGAGTVADLYISEDRGKNLS) lie on the Cytoplasmic side of the membrane. The helical transmembrane segment at 236–256 (YYYLGPLLAPLLSPIFGSLLV) threads the bilayer. Over 257–265 (NRWPWRSTQ) the chain is Extracellular. Residues 266-283 (WFMVILSGCNVILLTVLL) form a helical membrane-spanning segment. The Cytoplasmic portion of the chain corresponds to 284–475 (PETLRKQDSK…KSLHFLEYPP (192 aa)). Serine 436 bears the Phosphoserine mark. A helical membrane pass occupies residues 476–493 (VALAITFSAISFSTVYFV). The Extracellular segment spans residues 494 to 510 (NMTVEYKYSRPPYNFKP). A helical transmembrane segment spans residues 511-532 (LYIGLLYIPNSVTYFFASIYGG). The Cytoplasmic segment spans residues 533–558 (RWVDMLLKRYKEKYGILAPEARISWN). The chain crosses the membrane as a helical span at residues 559 to 577 (VVTSVISFPIALLIFGWCL). The Extracellular portion of the chain corresponds to 578 to 586 (DKKCHWVTP). The chain crosses the membrane as a helical span at residues 587–609 (LIGTALFGYAAMMTIGATLSYLV). The Cytoplasmic portion of the chain corresponds to 610–624 (DSLPGKGATGVALNN). Residues 625-642 (LIRQILAATAVFVTTPML) traverse the membrane as a helical segment. The Extracellular segment spans residues 643 to 648 (NGMGTG). A helical membrane pass occupies residues 649-668 (WAFTMLAFIVLGASSVLIIL). Residues 669–689 (KKHGDYWRENYDLQKLYDKID) are Cytoplasmic-facing.

The protein belongs to the major facilitator superfamily. CAR1 family.

It is found in the cell membrane. Multidrug resistance transporter involved in resistance and adaptation to quinidine and to the herbicide barban (4-chloro-2-butynyl [3-chlorophenyl] carbamate). The sequence is that of Quinidine resistance protein 3 (QDR3) from Saccharomyces cerevisiae (strain ATCC 204508 / S288c) (Baker's yeast).